Reading from the N-terminus, the 141-residue chain is Cholinesterase (141 aa).

An N-linked (GlcNAc...) asparagine glycan is attached at Asn39. 49–50 lines the substrate pocket; the sequence is GG. The Acyl-ester intermediate role is filled by Ser131. At Ser131 the chain carries Phosphoserine.

The protein belongs to the type-B carboxylesterase/lipase family. As to quaternary structure, homotetramer; disulfide-linked. Dimer of dimers. Present in most cells except erythrocytes.

The protein localises to the secreted. The catalysed reaction is an acylcholine + H2O = a carboxylate + choline + H(+). Its function is as follows. Esterase with broad substrate specificity. Contributes to the inactivation of the neurotransmitter acetylcholine. Can degrade neurotoxic organophosphate esters. This chain is Cholinesterase (BCHE), found in Macaca mulatta (Rhesus macaque).